The chain runs to 263 residues: Mediator of RNA polymerase II transcription subunit 6 (263 aa).

Over residues 163-181 (IHQSTSNPTQGQSSGKSIS) the composition is skewed to polar residues. The tract at residues 163–232 (IHQSTSNPTQ…NGSTSSAESA (70 aa)) is disordered. Residues 182–202 (ATVGNTGTTATPMTMQTPQTV) show a composition bias toward low complexity.

The protein belongs to the Mediator complex subunit 6 family. As to quaternary structure, component of the Mediator complex.

The protein resides in the nucleus. In terms of biological role, component of the Mediator complex, a coactivator involved in the regulated transcription of nearly all RNA polymerase II-dependent genes. Mediator functions as a bridge to convey information from gene-specific regulatory proteins to the basal RNA polymerase II transcription machinery. Mediator is recruited to promoters by direct interactions with regulatory proteins and serves as a scaffold for the assembly of a functional preinitiation complex with RNA polymerase II and the general transcription factors. The sequence is that of Mediator of RNA polymerase II transcription subunit 6 (MED6) from Scheffersomyces stipitis (strain ATCC 58785 / CBS 6054 / NBRC 10063 / NRRL Y-11545) (Yeast).